The following is a 327-amino-acid chain: Acetyl-coenzyme A carboxylase carboxyl transferase subunit beta (327 aa).

Residues 24-293 (LWIKCPDTGQ…LTVTTAVEAP (270 aa)) form the CoA carboxyltransferase N-terminal domain. Over residues 293–311 (PAEAAAKAEPEATTTEQPG) the composition is skewed to low complexity. The tract at residues 293–327 (PAEAAAKAEPEATTTEQPGAPAPTEPPAQPAAPQA) is disordered. Residues 312 to 327 (APAPTEPPAQPAAPQA) show a composition bias toward pro residues.

The protein belongs to the AccD/PCCB family. In terms of assembly, acetyl-CoA carboxylase is a heterohexamer composed of biotin carboxyl carrier protein (AccB), biotin carboxylase (AccC) and two subunits each of ACCase subunit alpha (AccA) and ACCase subunit beta (AccD).

It is found in the cytoplasm. It catalyses the reaction N(6)-carboxybiotinyl-L-lysyl-[protein] + acetyl-CoA = N(6)-biotinyl-L-lysyl-[protein] + malonyl-CoA. It functions in the pathway lipid metabolism; malonyl-CoA biosynthesis; malonyl-CoA from acetyl-CoA: step 1/1. Functionally, component of the acetyl coenzyme A carboxylase (ACC) complex. Biotin carboxylase (BC) catalyzes the carboxylation of biotin on its carrier protein (BCCP) and then the CO(2) group is transferred by the transcarboxylase to acetyl-CoA to form malonyl-CoA. This is Acetyl-coenzyme A carboxylase carboxyl transferase subunit beta from Rhodopseudomonas palustris (strain ATCC BAA-98 / CGA009).